The sequence spans 522 residues: Zinc finger protein STOP1 homolog (522 aa).

2 stretches are compositionally biased toward polar residues: residues 1 to 12 and 19 to 40; these read MDSGLGRSSETS and MASN…SSMD. Disordered stretches follow at residues 1–43 and 234–260; these read MDSG…DQPP and CGGE…EREN. The segment covering 244-260 has biased composition (basic and acidic residues); sequence MEDHDVKESDDGGEREN. A C2H2-type 1 zinc finger spans residues 282-304; that stretch reads HFCLICGKGFKRDANLRMHMRGH. Residues 390–421 form a C2H2-type 2; atypical zinc finger; that stretch reads KHCGRDKWLCSCGTTFSRKDKLFGHVALFQGH.

It is found in the nucleus. In terms of biological role, probable transcription factor that may be involved in aluminum tolerance. The chain is Zinc finger protein STOP1 homolog from Oryza sativa subsp. japonica (Rice).